The primary structure comprises 427 residues: Trigger factor (427 aa).

The region spanning 163–248 is the PPIase FKBP-type domain; the sequence is GDTVILDFEG…LHEIKTKEVP (86 aa).

It belongs to the FKBP-type PPIase family. Tig subfamily.

It is found in the cytoplasm. The enzyme catalyses [protein]-peptidylproline (omega=180) = [protein]-peptidylproline (omega=0). Functionally, involved in protein export. Acts as a chaperone by maintaining the newly synthesized protein in an open conformation. Functions as a peptidyl-prolyl cis-trans isomerase. The sequence is that of Trigger factor from Listeria monocytogenes serotype 4a (strain HCC23).